The primary structure comprises 147 residues: Leghemoglobin-1 (147 aa).

Residues 2-147 enclose the Globin domain; it reads SFTDKQEALV…LATAIKKAMS (146 aa). Residues Tyr25 and Tyr30 each carry the nitrated tyrosine modification. A heme b-binding site is contributed by Ser45. Ser45 carries the phosphoserine modification. Position 62 (His62) interacts with O2. Heme b is bound by residues Lys65, His94, and Lys97. At Tyr135 the chain carries Nitrated tyrosine.

This sequence belongs to the plant globin family. As to quaternary structure, monomer. In terms of processing, nitrated in effective nodules and particularly in hypoxic conditions; this mechanism may play a protective role in the symbiosis by buffering toxic peroxynitrite NO(2)(-). Nitration level decrease during nodule senescence. Post-translationally, phosphorylation at Ser-45 disrupts the molecular environment of its porphyrin ring oxygen binding pocket, thus leading to a reduced oxygen consumption and to the delivery of oxygen O(2) to symbiosomes. In terms of tissue distribution, root nodules.

Its subcellular location is the cytoplasm. It is found in the cytosol. It localises to the nucleus. In terms of biological role, leghemoglobin that reversibly binds oxygen O(2) through a pentacoordinated heme iron. In root nodules, facilitates the diffusion of oxygen to the bacteroids while preventing the bacterial nitrogenase from being inactivated by buffering dioxygen, nitric oxide and carbon monoxide, and promoting the formation of reactive oxygen species (ROS, e.g. H(2)O(2)). This role is essential for symbiotic nitrogen fixation (SNF). In Medicago sativa (Alfalfa), this protein is Leghemoglobin-1.